Reading from the N-terminus, the 274-residue chain is Envelope glycoprotein L (274 aa).

A signal peptide spans 1–21 (MMPLLLLILLSTRNLLGAAQS). Residues 51–251 (VEHKCREALA…RSYRDRFPAV (201 aa)) form the gL betaherpesvirus-type domain. C156 and C161 form a disulfide bridge.

Belongs to the herpesviridae glycoprotein L (gL) family. Betaherpesvirinae gL subfamily. As to quaternary structure, interacts with glycoprotein H (gH); this interaction is necessary for the correct processing and cell surface expression of gH.

It localises to the virion membrane. The protein localises to the host cell membrane. The protein resides in the host Golgi apparatus. It is found in the host trans-Golgi network. The heterodimer glycoprotein H-glycoprotein L is required for the fusion of viral and plasma membranes leading to virus entry into the host cell. Acts as a functional inhibitor of gH and maintains gH in an inhibited form. Upon binding to host integrins, gL dissociates from gH leading to activation of the viral fusion glycoproteins gB and gH. This chain is Envelope glycoprotein L, found in Murid herpesvirus 1 (strain Smith) (MuHV-1).